The sequence spans 294 residues: MSSELLQEVPKSIEHVKHIILILSGKGGVGKSSVTTQVALTLVNKGFNVGVLDIDLTGPSLPRMFGVENKQVHQSTQGWVPVSVYNNNNNQGTDSKRGNLSLMSLGFLLGDRGNSVVWRGPKKTAMIKQFLKDVVWGSTETPLDYLLIDTPPGTSDEHIAIAEELRWANPIDGAIIVTTPQQVATADVRKEINFCKKVNFQILGIVENMSGFICPHCSECTNIFSSGGGKALSEQLNLTYLGNVPIDPQFVELVELQNEQENKKLIELYDDCELKPILNGIVDKILDKNLPSRI.

25–32 contributes to the ATP binding site; sequence GKGGVGKS. [4Fe-4S] cluster is bound by residues cysteine 214 and cysteine 217.

The protein belongs to the Mrp/NBP35 ATP-binding proteins family. NUBP2/CFD1 subfamily. In terms of assembly, heterotetramer of 2 NBP35 and 2 CFD1 chains. [4Fe-4S] cluster is required as a cofactor.

It localises to the cytoplasm. Its function is as follows. Component of the cytosolic iron-sulfur (Fe/S) protein assembly (CIA) machinery. Required for maturation of extramitochondrial Fe-S proteins. The NBP35-CFD1 heterotetramer forms a Fe-S scaffold complex, mediating the de novo assembly of an Fe-S cluster and its transfer to target apoproteins. Required for biogenesis and export of both ribosomal subunits, which may reflect a role in assembly of the Fe/S clusters in RLI1, a protein which performs rRNA processing and ribosome export. In Candida albicans (strain SC5314 / ATCC MYA-2876) (Yeast), this protein is Cytosolic Fe-S cluster assembly factor CFD1.